Here is a 440-residue protein sequence, read N- to C-terminus: Platelet-activating factor acetylhydrolase (440 aa).

Residues 1 to 21 form the signal peptide; the sequence is MVPLKLQALFCLLCCLPWVHP. Residues asparagine 59, asparagine 75, and asparagine 199 are each glycosylated (N-linked (GlcNAc...) asparagine). Serine 272 functions as the Nucleophile in the catalytic mechanism. Active-site charge relay system residues include aspartate 295 and histidine 350.

This sequence belongs to the AB hydrolase superfamily. Lipase family. N-glycosylated. In terms of tissue distribution, plasma.

Its subcellular location is the secreted. It localises to the extracellular space. It carries out the reaction a 1-O-alkyl-2-acetyl-sn-glycero-3-phosphocholine + H2O = a 1-O-alkyl-sn-glycero-3-phosphocholine + acetate + H(+). The catalysed reaction is 1-O-decyl-2-acetyl-sn-glycero-3-phosphocholine + H2O = 1-O-decyl-sn-glycero-3-phosphocholine + acetate + H(+). It catalyses the reaction 1-O-dodecyl-2-acetyl-sn-glycero-3-phosphocholine + H2O = 1-O-dodecyl-sn-glycero-3-phosphocholine + acetate + H(+). The enzyme catalyses 1-O-tetradecyl-2-acetyl-sn-glycero-3-phosphocholine + H2O = 1-O-tetradecyl-sn-glycero-3-phosphocholine + acetate + H(+). It carries out the reaction 1-O-hexadecyl-2-acetyl-sn-glycero-3-phosphocholine + H2O = 1-O-hexadecyl-sn-glycero-3-phosphocholine + acetate + H(+). The catalysed reaction is 1-O-octadecyl-2-acetyl-sn-glycero-3-phosphocholine + H2O = 1-O-octadecyl-sn-glycero-3-phosphocholine + acetate + H(+). It catalyses the reaction 1-hexadecanoyl-2-acetyl-sn-glycero-3-phosphocholine + H2O = 1-hexadecanoyl-sn-glycero-3-phosphocholine + acetate + H(+). The enzyme catalyses 1-hexadecanoyl-2-propionyl-sn-glycero-3-phosphocholine + H2O = propanoate + 1-hexadecanoyl-sn-glycero-3-phosphocholine + H(+). It carries out the reaction 1-hexadecanoyl-2-butanoyl-sn-glycero-3-phosphocholine + H2O = butanoate + 1-hexadecanoyl-sn-glycero-3-phosphocholine + H(+). The catalysed reaction is 1-hexadecanoyl-2-pentanoyl-sn-glycero-3-phosphocholine + H2O = pentanoate + 1-hexadecanoyl-sn-glycero-3-phosphocholine + H(+). It catalyses the reaction 1-hexadecanoyl-2-glutaroyl-sn-glycero-3-phosphocholine + H2O = glutarate + 1-hexadecanoyl-sn-glycero-3-phosphocholine + H(+). The enzyme catalyses 1-hexadecanoyl-2-(5-oxopentanoyl)-sn-glycero-3-phosphocholine + H2O = 5-oxopentanoate + 1-hexadecanoyl-sn-glycero-3-phosphocholine + H(+). It carries out the reaction 1-hexadecanoyl-2-(9-oxononanoyl)-sn-glycero-3-phosphocholine + H2O = 9-oxononanoate + 1-hexadecanoyl-sn-glycero-3-phosphocholine + H(+). The catalysed reaction is 1-hexadecanoyl-2-[9-hydroperoxy-(10E-octadecenoyl)]-sn-glycero-3-phosphocholine + H2O = 9-hydroperoxy-10E-octadecenoate + 1-hexadecanoyl-sn-glycero-3-phosphocholine + H(+). It catalyses the reaction 1-hexadecanoyl-2-(10-hydroperoxy-8E-octadecenoyl)-sn-glycero-3-phosphocholine + H2O = 10-hydroperoxy-(8E)-octadecenoate + 1-hexadecanoyl-sn-glycero-3-phosphocholine + H(+). In terms of biological role, lipoprotein-associated calcium-independent phospholipase A2 involved in phospholipid catabolism during inflammatory and oxidative stress response. At the lipid-aqueous interface, hydrolyzes the ester bond of fatty acyl group attached at sn-2 position of phospholipids (phospholipase A2 activity). Specifically targets phospholipids with a short-chain fatty acyl group at sn-2 position. Can hydrolyze phospholipids with long fatty acyl chains, only if they carry oxidized functional groups. Hydrolyzes and inactivates platelet-activating factor (PAF, 1-O-alkyl-2-acetyl-sn-glycero-3-phosphocholine), a potent pro-inflammatory signaling lipid that acts through PTAFR on various innate immune cells. Hydrolyzes oxidatively truncated phospholipids carrying an aldehyde group at omega position, preventing their accumulation in lipoprotein particles and uncontrolled pro-inflammatory effects. As part of high-density lipoprotein (HDL) particles, can hydrolyze phospholipids having long-chain fatty acyl hydroperoxides at sn-2 position and protect against potential accumulation of these oxylipins in the vascular wall. Catalyzes the release from membrane phospholipids of F2-isoprostanes, lipid biomarkers of cellular oxidative damage. This is Platelet-activating factor acetylhydrolase (Pla2g7) from Mus musculus (Mouse).